The primary structure comprises 388 residues: Succinyl-diaminopimelate desuccinylase (388 aa).

His71 is a Zn(2+) binding site. Asp73 is a catalytic residue. Residue Asp104 coordinates Zn(2+). Residue Glu143 is the Proton acceptor of the active site. Positions 144, 172, and 361 each coordinate Zn(2+).

The protein belongs to the peptidase M20A family. DapE subfamily. As to quaternary structure, homodimer. Zn(2+) is required as a cofactor. Co(2+) serves as cofactor.

The catalysed reaction is N-succinyl-(2S,6S)-2,6-diaminopimelate + H2O = (2S,6S)-2,6-diaminopimelate + succinate. It functions in the pathway amino-acid biosynthesis; L-lysine biosynthesis via DAP pathway; LL-2,6-diaminopimelate from (S)-tetrahydrodipicolinate (succinylase route): step 3/3. Catalyzes the hydrolysis of N-succinyl-L,L-diaminopimelic acid (SDAP), forming succinate and LL-2,6-diaminopimelate (DAP), an intermediate involved in the bacterial biosynthesis of lysine and meso-diaminopimelic acid, an essential component of bacterial cell walls. This chain is Succinyl-diaminopimelate desuccinylase, found in Bradyrhizobium diazoefficiens (strain JCM 10833 / BCRC 13528 / IAM 13628 / NBRC 14792 / USDA 110).